The chain runs to 101 residues: MLQVQEKAGSVFFSIKAQPRSSKSMITGEYDGSIKVNLKAPPVDGEANLECCRLLARTLGVARSSVEIVSGTRGKMKRVKVFGLSAVEFTEKITPYLYSSP.

This sequence belongs to the UPF0235 family.

This Chlorobium phaeobacteroides (strain BS1) protein is UPF0235 protein Cphamn1_2066.